The sequence spans 786 residues: Phenylalanine--tRNA ligase beta subunit (786 aa).

Residues 39-150 (LRAPDRVVVG…GELKLGKPLH (112 aa)) form the tRNA-binding domain. In terms of domain architecture, B5 spans 397-474 (YKPATITVDL…RLLGIDTILA (78 aa)). Residues Asp452, Asp458, Glu461, and Glu462 each coordinate Mg(2+). Positions 693–786 (SKFPKLQRDL…LNHRFGAKLR (94 aa)) constitute an FDX-ACB domain.

The protein belongs to the phenylalanyl-tRNA synthetase beta subunit family. Type 1 subfamily. In terms of assembly, tetramer of two alpha and two beta subunits. Mg(2+) serves as cofactor.

It localises to the cytoplasm. The enzyme catalyses tRNA(Phe) + L-phenylalanine + ATP = L-phenylalanyl-tRNA(Phe) + AMP + diphosphate + H(+). In Wolinella succinogenes (strain ATCC 29543 / DSM 1740 / CCUG 13145 / JCM 31913 / LMG 7466 / NCTC 11488 / FDC 602W) (Vibrio succinogenes), this protein is Phenylalanine--tRNA ligase beta subunit.